Here is a 370-residue protein sequence, read N- to C-terminus: UDP-N-acetylglucosamine--N-acetylmuramyl-(pentapeptide) pyrophosphoryl-undecaprenol N-acetylglucosamine transferase (370 aa).

Residues 10–12 (TGG), N126, S200, I255, and Q300 contribute to the UDP-N-acetyl-alpha-D-glucosamine site.

The protein belongs to the glycosyltransferase 28 family. MurG subfamily.

Its subcellular location is the cell membrane. It catalyses the reaction Mur2Ac(oyl-L-Ala-gamma-D-Glu-L-Lys-D-Ala-D-Ala)-di-trans,octa-cis-undecaprenyl diphosphate + UDP-N-acetyl-alpha-D-glucosamine = beta-D-GlcNAc-(1-&gt;4)-Mur2Ac(oyl-L-Ala-gamma-D-Glu-L-Lys-D-Ala-D-Ala)-di-trans,octa-cis-undecaprenyl diphosphate + UDP + H(+). It participates in cell wall biogenesis; peptidoglycan biosynthesis. Cell wall formation. Catalyzes the transfer of a GlcNAc subunit on undecaprenyl-pyrophosphoryl-MurNAc-pentapeptide (lipid intermediate I) to form undecaprenyl-pyrophosphoryl-MurNAc-(pentapeptide)GlcNAc (lipid intermediate II). This is UDP-N-acetylglucosamine--N-acetylmuramyl-(pentapeptide) pyrophosphoryl-undecaprenol N-acetylglucosamine transferase from Lactobacillus johnsonii (strain CNCM I-12250 / La1 / NCC 533).